The chain runs to 255 residues: Putative cysteine-rich repeat secretory protein 32 (255 aa).

A signal peptide spans 1 to 28; it reads MYSSYSLFKCLVCFYILGIQVLIHSVSS. Gnk2-homologous domains are found at residues 35-136 and 143-252; these read YLHH…TINS and YENT…LYPF.

The protein belongs to the cysteine-rich repeat secretory protein family.

The protein resides in the secreted. This chain is Putative cysteine-rich repeat secretory protein 32 (CRRSP32), found in Arabidopsis thaliana (Mouse-ear cress).